A 500-amino-acid polypeptide reads, in one-letter code: Lysine--tRNA ligase (500 aa).

Mg(2+)-binding residues include Glu-410 and Glu-417.

The protein belongs to the class-II aminoacyl-tRNA synthetase family. Homodimer. Mg(2+) is required as a cofactor.

The protein localises to the cytoplasm. The catalysed reaction is tRNA(Lys) + L-lysine + ATP = L-lysyl-tRNA(Lys) + AMP + diphosphate. The chain is Lysine--tRNA ligase from Pseudomonas entomophila (strain L48).